Reading from the N-terminus, the 356-residue chain is MRVLVAMSGGVDSSVAAARMVDAGHDVVGVHLALSSAPGTLRTGSRGCCSKEDASDARRVADILGIPFYVWDFADRFKDDVIDDFVESYARGETPNPCVRCNERIKFSALAARALALGFDAVATGHYARLSDGRLRRAVDADKDQSYVLGVLTAEQLRHALFPIGDTPKPQIRAEAAERGLAVAEKPDSHDICFIPTGDTKAFLGARIGVRPGAVVDGSGTVLAEHDGVHGFTIGQRKGLGIAGPGADGRPRYVTAIDAETGTVRVGPAEDLEVWELTGERPVFTSGVEPGGPIECQVQVRAHGGITDTVAELRDGKLELSLRAPLRGVAPGQTMVLYRPDPDGDEVIASATITRR.

ATP contacts are provided by residues 6–13 (AMSGGVDS) and L32. C101 functions as the Nucleophile in the catalytic mechanism. C101 and C193 are joined by a disulfide. Residue G125 participates in ATP binding. Residues 143 to 145 (KDQ) form an interaction with tRNA region. C193 functions as the Cysteine persulfide intermediate in the catalytic mechanism.

This sequence belongs to the MnmA/TRMU family.

It localises to the cytoplasm. It carries out the reaction S-sulfanyl-L-cysteinyl-[protein] + uridine(34) in tRNA + AH2 + ATP = 2-thiouridine(34) in tRNA + L-cysteinyl-[protein] + A + AMP + diphosphate + H(+). Catalyzes the 2-thiolation of uridine at the wobble position (U34) of tRNA, leading to the formation of s(2)U34. In Mycolicibacterium smegmatis (strain ATCC 700084 / mc(2)155) (Mycobacterium smegmatis), this protein is tRNA-specific 2-thiouridylase MnmA.